A 251-amino-acid polypeptide reads, in one-letter code: Segregation and condensation protein A (251 aa).

It belongs to the ScpA family. As to quaternary structure, component of a cohesin-like complex composed of ScpA, ScpB and the Smc homodimer, in which ScpA and ScpB bind to the head domain of Smc. The presence of the three proteins is required for the association of the complex with DNA.

Its subcellular location is the cytoplasm. In terms of biological role, participates in chromosomal partition during cell division. May act via the formation of a condensin-like complex containing Smc and ScpB that pull DNA away from mid-cell into both cell halves. The chain is Segregation and condensation protein A from Exiguobacterium sibiricum (strain DSM 17290 / CCUG 55495 / CIP 109462 / JCM 13490 / 255-15).